Reading from the N-terminus, the 308-residue chain is Mannan endo-1,4-beta-mannosidase (308 aa).

The active-site Proton donor is the glutamate 125. Residue glutamate 220 is the Nucleophile of the active site. Positions 284–308 (DGLQETSKPSTVFTDDNGGHPEPPT) are disordered. The span at 287–297 (QETSKPSTVFT) shows a compositional bias: polar residues.

This sequence belongs to the glycosyl hydrolase 5 (cellulase A) family.

The enzyme catalyses Random hydrolysis of (1-&gt;4)-beta-D-mannosidic linkages in mannans, galactomannans and glucomannans.. Its function is as follows. Catalyzes the endo hydrolysis of beta-1,4-linked mannan, galactomannan and glucomannan. It is able to hydrolyze mannosidic linkages that are flanked by mannose or glucose. This Salipaludibacillus agaradhaerens (Bacillus agaradhaerens) protein is Mannan endo-1,4-beta-mannosidase.